The chain runs to 299 residues: Probable lipid kinase YegS (299 aa).

A DAGKc domain is found at 2 to 133 (AEFPASLLIL…IDMAQVNKQT (132 aa)). ATP is bound by residues Thr-40, 66–72 (GDGTINE), and Thr-95. Positions 215, 218, and 220 each coordinate Mg(2+). The active-site Proton acceptor is Glu-271.

It belongs to the diacylglycerol/lipid kinase family. YegS lipid kinase subfamily. It depends on Mg(2+) as a cofactor. Ca(2+) is required as a cofactor.

The protein resides in the cytoplasm. In terms of biological role, probably phosphorylates lipids; the in vivo substrate is unknown. This chain is Probable lipid kinase YegS, found in Escherichia coli (strain 55989 / EAEC).